Here is a 231-residue protein sequence, read N- to C-terminus: Probable tetraspanin tspE (231 aa).

Topologically, residues 1 to 21 (MTFVDNFEFNQNTPRLVRGPF) are cytoplasmic. A helical transmembrane segment spans residues 22–42 (IILNSIIFSLSFILLCSTGII). Residues 43-58 (IYYLNEYYLVKDLTIP) lie on the Extracellular side of the membrane. A helical transmembrane segment spans residues 59-79 (LGSFILSAYMVITTIVGGIAI). The Cytoplasmic portion of the chain corresponds to 80–83 (WKKK). Residues 84–104 (LGLHLTFMVFLVVLIVCLVGV) form a helical membrane-spanning segment. Over 105-195 (SAKMIVDSGN…VESILKYLGY (91 aa)) the chain is Extracellular. The helical transmembrane segment at 196–216 (YGIVLSVIELILLILSGFFLL) threads the bilayer. Residues 217–231 (KTNKNVKSKSFILQD) are Cytoplasmic-facing.

It belongs to the tetraspanin (TM4SF) family.

The protein localises to the membrane. This is Probable tetraspanin tspE (tspE) from Dictyostelium discoideum (Social amoeba).